A 239-amino-acid polypeptide reads, in one-letter code: Fatty acid metabolism regulator protein (239 aa).

An HTH gntR-type domain is found at 6–74; that stretch reads QSPAGFAEEY…HGKPTQVNNF (69 aa). Residues 34 to 53 constitute a DNA-binding region (H-T-H motif); that stretch reads ERELSELIGVTRTTLREVLQ.

In terms of assembly, homodimer.

The protein localises to the cytoplasm. In terms of biological role, multifunctional regulator of fatty acid metabolism. The polypeptide is Fatty acid metabolism regulator protein (Edwardsiella ictaluri (strain 93-146)).